The primary structure comprises 223 residues: Cytolethal distending toxin subunit A (223 aa).

Positions 1 to 15 are cleaved as a signal peptide; that stretch reads MKKFLPSLLLMGSVA. Residue cysteine 16 is the site of N-palmitoyl cysteine attachment. The S-diacylglycerol cysteine moiety is linked to residue cysteine 16. The interval 20 to 48 is disordered; sequence QRMNDYSQPESQSDLAPKSSTIQPQPQPL. The mediates binding to target cells stretch occupies residues 91–102; the sequence is WALAKRNWLWAY. Residues 123-212 form the Ricin B-type lectin domain; sequence HREYFRFVNQ…EPSRDQTWYL (90 aa).

Heterotrimer of 3 subunits, CdtA, CdtB and CdtC.

It localises to the cell outer membrane. Its function is as follows. CDTs are cytotoxins which induce host cell distension, growth arrest in G2/M phase, nucleus swelling, and chromatin fragmentation in HeLa cells. CdtA, along with CdtC, probably forms a heterodimeric subunit required for the delivery of CdtB. This chain is Cytolethal distending toxin subunit A (cdtA), found in Haemophilus ducreyi (strain 35000HP / ATCC 700724).